The sequence spans 141 residues: Protein nfe1 (141 aa).

This sequence to the N-terminal of nitrogenase iron protein (NifH). Has lost the ATP-binding site.

Functionally, responsible for the nodulation efficiency and competitive ability of strain GR4 on alfalfa roots. The protein is Protein nfe1 (nfe1) of Rhizobium meliloti (Ensifer meliloti).